The following is a 237-amino-acid chain: 1-(5-phosphoribosyl)-5-[(5-phosphoribosylamino)methylideneamino] imidazole-4-carboxamide isomerase (237 aa).

Aspartate 8 acts as the Proton acceptor in catalysis. Aspartate 128 functions as the Proton donor in the catalytic mechanism.

It belongs to the HisA/HisF family.

The protein resides in the cytoplasm. The catalysed reaction is 1-(5-phospho-beta-D-ribosyl)-5-[(5-phospho-beta-D-ribosylamino)methylideneamino]imidazole-4-carboxamide = 5-[(5-phospho-1-deoxy-D-ribulos-1-ylimino)methylamino]-1-(5-phospho-beta-D-ribosyl)imidazole-4-carboxamide. The protein operates within amino-acid biosynthesis; L-histidine biosynthesis; L-histidine from 5-phospho-alpha-D-ribose 1-diphosphate: step 4/9. In Gemmatimonas aurantiaca (strain DSM 14586 / JCM 11422 / NBRC 100505 / T-27), this protein is 1-(5-phosphoribosyl)-5-[(5-phosphoribosylamino)methylideneamino] imidazole-4-carboxamide isomerase.